Here is an 822-residue protein sequence, read N- to C-terminus: Outer dense fiber protein 2 (822 aa).

Positions 26–45 (KGQKTTPAKCQQKHKQKMKG) are disordered. Coiled-coil stretches lie at residues 113-418 (CKMN…EECA), 452-490 (DKSD…ALMD), and 516-796 (MEEK…NYVQ).

Belongs to the ODF2 family. Self-associates. Associates with microtubules and forms a fibrillar structure partially linked to the microtubule network.

It is found in the cytoplasm. The protein localises to the cytoskeleton. The protein resides in the microtubule organizing center. Its subcellular location is the centrosome. It localises to the cell projection. It is found in the cilium. The protein localises to the centriole. The protein resides in the spindle pole. Its subcellular location is the flagellum. Functionally, seems to be a major component of sperm tail outer dense fibers (ODF). ODFs are filamentous structures located on the outside of the axoneme in the midpiece and principal piece of the mammalian sperm tail and may help to maintain the passive elastic structures and elastic recoil of the sperm tail. This is Outer dense fiber protein 2 (ODF2) from Gallus gallus (Chicken).